The chain runs to 4834 residues: E3 ubiquitin-protein ligase HERC2 (4834 aa).

Positions 50-88 (TESTQNGELPPRKDDSVEPSGTKKEDLNDKEKKDEEETP) are disordered. Over residues 59 to 84 (PPRKDDSVEPSGTKKEDLNDKEKKDE) the composition is skewed to basic and acidic residues. Threonine 272 bears the Phosphothreonine mark. An RCC1 1-1 repeat occupies 415–461 (PTSHKGSLQEVIGWGLIGWKYYANVIGPIQCEGLANLGVTQIACAEK). Residues 462 to 512 (RFLILSRNGRVYTQAYNSDTLAPQLVQGLASRNIVKIAAHSDGHHYLALAA) form an RCC1 1-2 repeat. An RCC1 1-3 repeat occupies 513-568 (TGEVYSWGCGDGGRLGHGDTVPLEEPKVISAFSGKQAGKHVVHIACGSTYSAAITA). The RCC1 1-4 repeat unit spans residues 569–620 (EGELYTWGRGNYGRLGHGSSEDEAIPMLVAGLKGLKVIDVACGSGDAQTLAV). One copy of the RCC1 1-5 repeat lies at 623 to 674 (NGQVWSWGDGDYGKLGRGGSDGCKTPKLIEKLQDLDVVKVRCGSQFSIALTK). Phosphothreonine is present on threonine 647. The RCC1 1-6 repeat unit spans residues 675-726 (DGQVYSWGKGDNQRLGHGTEEHVRYPKLLEGLQGKKVIDVAAGSTHCLALTE). One copy of the RCC1 1-7 repeat lies at 728–778 (SEVHSWGSNDQCQHFDTLRVTKPEPAALPGLDTKHIVGIACGPAQSFAWSS). A coiled-coil region spans residues 948–980 (LHAAITAEIQDIEAKKEAQKEKEIDEQEANAST). A Cytochrome b5 heme-binding domain is found at 1207–1283 (VTLIRKADLE…MHAFCVGQYL (77 aa)). Positions 1555–1575 (RKKRVPKKPESTDDEEKIGNE) are disordered. Residues 1566-1575 (TDDEEKIGNE) show a composition bias toward acidic residues. A Phosphoserine modification is found at serine 1577. In terms of domain architecture, MIB/HERC2 spans 1859–1932 (SGPELAAMMK…KYDLKLAELP (74 aa)). The segment at 1933–1958 (AAAQPSAEDSDTEDDSEAEQTERNIH) is disordered. The segment covering 1940-1951 (EDSDTEDDSEAE) has biased composition (acidic residues). A Phosphoserine modification is found at serine 1942. Threonine 1944 is subject to Phosphothreonine. At serine 2454 the chain carries Phosphoserine. Residues 2554-2630 (RADFLSNDDY…RYIHVELIGY (77 aa)) form the CPH domain. The ZZ-type zinc finger occupies 2703–2755 (HPGVTCDGCQMFPINGSRFKCRNCDDFDFCETCFKTKKHNTRHTFGRINEPGQ). Positions 2708, 2711, 2723, 2726, 2732, 2735, 2741, and 2745 each coordinate Zn(2+). The DOC domain occupies 2759–2936 (FCGRSGKQLK…ASDNEEEEDE (178 aa)). At serine 2928 the chain carries Phosphoserine. The stretch at 2958–3009 (RTKVFVWGLNDKDQLGGLKGSKIKVPSFSETLSALNVVQVAGGSKSLFAVTV) is one RCC1 2-1 repeat. An RCC1 2-2 repeat occupies 3010–3064 (EGKVYACGEATNGRLGLGISSGTVPIPRQITALSSYVVKKVAVHSGGRHATALTV). An RCC1 2-3 repeat occupies 3065–3116 (DGKVFSWGEGDDGKLGHFSRMNCDKPRLIEALKTKRIRDIACGSSHSAALTS). The RCC1 2-4 repeat unit spans residues 3118-3168 (GELYTWGLGEYGRLGHGDNTTQLKPKMVKVLLGHRVIQVACGSRDAQTLAL). An RCC1 2-5 repeat occupies 3171-3222 (EGLVFSWGDGDFGKLGRGGSEGCNIPQNIERLNGQGVCQIECGAQFSLALTK). One copy of the RCC1 2-6 repeat lies at 3224–3274 (GVVWTWGKGDYFRLGHGSDVHVRKPQVVEGLRGKKIVHVAVGALHCLAVTD). The RCC1 2-7 repeat unit spans residues 3275–3326 (SGQVYAWGDNDHGQQGNGTTTVNRKPTLVQGLEGQKITRVACGSSHSVAWTT). 2 stretches are compositionally biased toward polar residues: residues 3602–3611 (SQSGRLSSQP) and 3618–3629 (HPYTDDTSTSGT). The interval 3602–3629 (SQSGRLSSQPVVVESSHPYTDDTSTSGT) is disordered. Residues 3951 to 4002 (SGTIYGWGHNHRGQLGGIEGAKVKVPTPCEALATLRPVQLIGGEQTLFAVTA) form an RCC1 3-1 repeat. An RCC1 3-2 repeat occupies 4004–4056 (GKLYATGYGAGGRLGIGGTESVSTPTLLESIQHVFIKKVAVNSGGKHCLALSS). Residues 4058–4108 (GEVYSWGEAEDGKLGHGNRSPCDRPRVIESLRGIEVVDVAAGGAHSACVTA) form an RCC1 3-3 repeat. One copy of the RCC1 3-4 repeat lies at 4110-4162 (GDLYTWGKGRYGRLGHSDSEDQLKPKLVEALQGHRVVDIACGSGDAQTLCLTD). The RCC1 3-5 repeat unit spans residues 4164–4214 (DTVWSWGDGDYGKLGRGGSDGCKVPMKIDSLTGLGVVKVECGSQFSVALTK). An RCC1 3-6 repeat occupies 4216-4266 (GAVYTWGKGDYHRLGHGSDDHVRRPRQVQGLQGKKVIAIATGSLHCVCCTE). The stretch at 4268 to 4318 (GEVYTWGDNDEGQLGDGTTNAIQRPRLVAALQGKKVNRVACGSAHTLAWST) is one RCC1 3-7 repeat. In terms of domain architecture, HECT spans 4457 to 4794 (DSLLLPHRVW…IHFCKSIDTD (338 aa)). The active-site Glycyl thioester intermediate is the cysteine 4762. A disordered region spans residues 4804-4834 (EPAADDSSDDSDNEDVDSFASDSTQDYLTGH). Acidic residues predominate over residues 4806 to 4820 (AADDSSDDSDNEDVD). Phosphoserine occurs at positions 4810, 4811, and 4814. A compositionally biased stretch (polar residues) spans 4823 to 4834 (ASDSTQDYLTGH). Threonine 4827 is modified (phosphothreonine).

As to quaternary structure, interacts (when phosphorylated at Thr-4827 and sumoylated) with RNF8 (via FHA domain); this interaction increases after ionizing radiation (IR) treatment. Interacts with XPA. Interacts with NEURL4. Via its interaction with NEURL4, may indirectly interact with CCP110 and CEP97. Post-translationally, phosphorylation at Thr-4827 is required for interaction with RNF8. Sumoylated with SUMO1 by PIAS4 in response to double-strand breaks (DSBs), promoting the interaction with RNF8.

Its subcellular location is the cytoplasm. It localises to the cytoskeleton. The protein resides in the microtubule organizing center. The protein localises to the centrosome. It is found in the centriole. Its subcellular location is the nucleus. It catalyses the reaction S-ubiquitinyl-[E2 ubiquitin-conjugating enzyme]-L-cysteine + [acceptor protein]-L-lysine = [E2 ubiquitin-conjugating enzyme]-L-cysteine + N(6)-ubiquitinyl-[acceptor protein]-L-lysine.. It participates in protein modification; protein ubiquitination. Its function is as follows. E3 ubiquitin-protein ligase that regulates ubiquitin-dependent retention of repair proteins on damaged chromosomes. Recruited to sites of DNA damage in response to ionizing radiation (IR) and facilitates the assembly of UBE2N and RNF8 promoting DNA damage-induced formation of 'Lys-63'-linked ubiquitin chains. Acts as a mediator of binding specificity between UBE2N and RNF8. Involved in the maintenance of RNF168 levels. E3 ubiquitin-protein ligase that promotes the ubiquitination and proteasomal degradation of XPA which influences the circadian oscillation of DNA excision repair activity. By controlling the steady-state expression of the IGF1R receptor, indirectly regulates the insulin-like growth factor receptor signaling pathway. Also modulates iron metabolism by regulating the basal turnover of FBXL5. The chain is E3 ubiquitin-protein ligase HERC2 from Homo sapiens (Human).